An 88-amino-acid polypeptide reads, in one-letter code: MDPMKAQQLAAELEVEMMADMYNRMTNACHRKCVPPHYKEAELSKGEAVCLDRCVAKYLDLHERLGRKLTELSVQDEEVMRKAAAGTG.

Positions 29–54 (CHRKCVPPHYKEAELSKGEAVCLDRC) match the Twin CX3C motif motif. 2 cysteine pairs are disulfide-bonded: cysteine 29/cysteine 54 and cysteine 33/cysteine 50.

This sequence belongs to the small Tim family. In terms of assembly, heterohexamer; composed of 3 copies of TIMM9 and 3 copies of TIMM10/TIM10A, named soluble 70 kDa complex. The complex forms a 6-bladed alpha-propeller structure and associates with the TIMM22 component of the TIM22 complex. Interacts with multi-pass transmembrane proteins in transit.

The protein resides in the mitochondrion inner membrane. Mitochondrial intermembrane chaperone that participates in the import and insertion of multi-pass transmembrane proteins into the mitochondrial inner membrane. May also be required for the transfer of beta-barrel precursors from the TOM complex to the sorting and assembly machinery (SAM complex) of the outer membrane. Acts as a chaperone-like protein that protects the hydrophobic precursors from aggregation and guide them through the mitochondrial intermembrane space. The polypeptide is Mitochondrial import inner membrane translocase subunit Tim10 (timm10) (Danio rerio (Zebrafish)).